The primary structure comprises 442 residues: Alpha-1,6-mannosyl-glycoprotein 2-beta-N-acetylglucosaminyltransferase (442 aa).

The Cytoplasmic segment spans residues 1-9 (MRFRIYKRK). The chain crosses the membrane as a helical; Signal-anchor for type II membrane protein span at residues 10 to 29 (VLILTLVVAACGFVLWSSNG). Residues 30 to 442 (RQRKSDALGP…ELCKSYRRLQ (413 aa)) lie on the Lumenal side of the membrane. Asn64 and Asn81 each carry an N-linked (GlcNAc...) asparagine glycan. Residues 118 to 122 (QVHNR) and Asp149 contribute to the substrate site. A disulfide bridge links Cys191 with Cys205. Position 224–228 (224–228 (QTKHH)) interacts with substrate. Asp256 lines the Mn(2+) pocket. An intrachain disulfide couples Cys278 to Cys281. Arg293 lines the substrate pocket. Intrachain disulfides connect Cys329–Cys352, Cys334–Cys435, and Cys373–Cys381. Residue His369 coordinates Mn(2+).

It belongs to the glycosyltransferase 16 (GT16) protein family. Homodimer. It depends on Mn(2+) as a cofactor. Detected in liver, lung, testis, kidney, brain, spleen, thymus, uterus and intestine.

The protein localises to the golgi apparatus membrane. It carries out the reaction an N(4)-{beta-D-GlcNAc-(1-&gt;2)-alpha-D-Man-(1-&gt;3)-[alpha-D-Man-(1-&gt;6)]-beta-D-Man-(1-&gt;4)-beta-D-GlcNAc-(1-&gt;4)-beta-D-GlcNAc}-L-asparaginyl-[protein] + UDP-N-acetyl-alpha-D-glucosamine = N(4)-{beta-D-GlcNAc-(1-&gt;2)-alpha-D-Man-(1-&gt;3)-[beta-D-GlcNAc-(1-&gt;2)-alpha-D-Man-(1-&gt;6)]-beta-D-Man-(1-&gt;4)-beta-D-GlcNAc-(1-&gt;4)-beta-D-GlcNAc}-L-asparaginyl-[protein] + UDP + H(+). The protein operates within protein modification; protein glycosylation. Functionally, plays an essential role in protein N-glycosylation. Catalyzes the transfer of N-acetylglucosamine (GlcNAc) onto the free terminal mannose moiety in the core structure of the nascent N-linked glycan chain, giving rise to the second branch in complex glycans. In Mus musculus (Mouse), this protein is Alpha-1,6-mannosyl-glycoprotein 2-beta-N-acetylglucosaminyltransferase (Mgat2).